Here is a 504-residue protein sequence, read N- to C-terminus: Arabinose import ATP-binding protein AraG (504 aa).

ABC transporter domains are found at residues 8 to 243 (LSFR…MVGR) and 256 to 499 (YGEE…MPKV). 40-47 (GENGAGKS) contributes to the ATP binding site.

This sequence belongs to the ABC transporter superfamily. Arabinose importer (TC 3.A.1.2.2) family. The complex is composed of two ATP-binding proteins (AraG), two transmembrane proteins (AraH) and a solute-binding protein (AraF).

Its subcellular location is the cell inner membrane. The enzyme catalyses L-arabinose(out) + ATP + H2O = L-arabinose(in) + ADP + phosphate + H(+). In terms of biological role, part of the ABC transporter complex AraFGH involved in arabinose import. Responsible for energy coupling to the transport system. This chain is Arabinose import ATP-binding protein AraG, found in Shigella dysenteriae serotype 1 (strain Sd197).